The sequence spans 866 residues: Phospholipase D gamma 3 (866 aa).

Residues 31 to 170 (PFDTSSGSLR…CSGNRIEGLF (140 aa)) form the C2 domain. Ca(2+) is bound at residue aspartate 232. The region spanning 371–406 (TIYTHHQKTMIVDAEAAQNRRKIVAFVGGLDLCNGR) is the PLD phosphodiesterase 1 domain. Residues histidine 376, lysine 378, and aspartate 383 contribute to the active site. Residue histidine 376 participates in a 1,2-diacyl-sn-glycero-3-phosphate binding. 2 residues coordinate Ca(2+): histidine 412 and histidine 444. An a 1,2-diacyl-sn-glycero-3-phosphate-binding site is contributed by glutamine 572. Serine 692 carries the post-translational modification Phosphoserine. One can recognise a PLD phosphodiesterase 2 domain in the interval 712–739 (FMIYVHSKGMVVDDEFVLIGSANINQRS). Active-site residues include histidine 717, lysine 719, and aspartate 724. Histidine 717 contributes to the a 1,2-diacyl-sn-glycero-3-phosphate binding site. A Ca(2+)-binding site is contributed by glutamate 780.

This sequence belongs to the phospholipase D family. C2-PLD subfamily. The cofactor is Ca(2+). Highly expressed in inflorescences and old leaves, moderately in stems, roots, siliques and young leaves and low in flowers.

It is found in the cytoplasm. The protein resides in the membrane. The catalysed reaction is a 1,2-diacyl-sn-glycero-3-phosphocholine + H2O = a 1,2-diacyl-sn-glycero-3-phosphate + choline + H(+). With respect to regulation, inhibited by neomycin. Functionally, hydrolyzes glycerol-phospholipids at the terminal phosphodiesteric bond to generate phosphatidic acids (PA). Plays an important role in various cellular processes, including phytohormone action, vesicular trafficking, secretion, cytoskeletal arrangement, meiosis, tumor promotion, pathogenesis, membrane deterioration and senescence. Can use phosphatidylserine but prefers ethanolamine-containing lipids as substrates. The chain is Phospholipase D gamma 3 from Arabidopsis thaliana (Mouse-ear cress).